A 1203-amino-acid chain; its full sequence is MEQAPNMAEPRGPVDHGVQIRFITEPVSGAEMGTLRRGGRRPAKDARASTYGVAVRVQGIAGQPFVVLNSGEKGGDSFGVQIKGANDQGASGALSSDLELPENPYSQVKGFPAPSQSSTSDEEPGAYWNGKLLRSHSQASLAGPGPVDPSNRSNSMLELAPKVASPGSTIDTAPLSSVDSLINKFDSQLGGQARGRTGRRTRMLPPEQRKRSKSLDSRLPRDTFEERERQSTNHWTSSTKYDNHVGTSKQPAQSQNLSPLSGFSRSRQTQDWVLQSFEEPRRSAQDPTMLQFKSTPDLLRDQQEAAPPGSVDHMKATIYGILREGSSESETSVRRKVSLVLEKMQPLVMVSSGSTKAVAGQGELTRKVEELQRKLDEEVKKRQKLEPSQVGLERQLEEKTEECSRLQELLERRKGEAQQSNKELQNMKRLLDQGEDLRHGLETQVMELQNKLKHVQGPEPAKEVLLKDLLETRELLEEVLEGKQRVEEQLRLRERELTALKGALKEEVASRDQEVEHVRQQYQRDTEQLRRSMQDATQDHAVLEAERQKMSALVRGLQRELEETSEETGHWQSMFQKNKEDLRATKQELLQLRMEKEEMEEELGEKIEVLQRELEQARASAGDTRQVEVLKKELLRTQEELKELQAERQSQEVAGRHRDRELEKQLAVLRVEADRGRELEEQNLQLQKTLQQLRQDCEEASKAKMVAEAEATVLGQRRAAVETTLRETQEENDEFRRRILGLEQQLKETRGLVDGGEAVEARLRDKLQRLEAEKQQLEEALNASQEEEGSLAAAKRALEARLEEAQRGLARLGQEQQTLNRALEEEGKQREVLRRGKAELEEQKRLLDRTVDRLNKELEKIGEDSKQALQQLQAQLEDYKEKARREVADAQRQAKDWASEAEKTSGGLSRLQDEIQRLRQALQASQAERDTARLDKELLAQRLQGLEQEAENKKRSQDDRARQLKGLEEKVSRLETELDEEKNTVELLTDRVNRGRDQVDQLRTELMQERSARQDLECDKISLERQNKDLKTRLASSEGFQKPSASLSQLESQNQLLQERLQAEEREKTVLQSTNRKLERKVKELSIQIEDERQHVNDQKDQLSLRVKALKRQVDEAEEEIERLDGLRKKAQREVEEQHEVNEQLQARIKSLEKDSWRKASRSAAESALKNEGLSSDEEFDSVYDPSSIASLLTESNLQTSSC.

Residues 7-357 (MAEPRGPVDH…VMVSSGSTKA (351 aa)) are head. The disordered stretch occupies residues 25-48 (EPVSGAEMGTLRRGGRRPAKDARA). The ZIM signature appears at 48–62 (ASTYGVAVRVQGIAG). Residues 54–67 (AVRVQGIAGQPFVV) are interaction with TJP1/ZO1. A disordered region spans residues 89–127 (GASGALSSDLELPENPYSQVKGFPAPSQSSTSDEEPGAY). Residues Ser-95, Ser-96, Ser-135, Ser-137, Ser-140, Ser-155, Ser-165, Ser-214, Ser-217, Ser-258, Ser-276, Ser-338, and Ser-351 each carry the phosphoserine modification. A disordered region spans residues 186–266 (DSQLGGQARG…LSPLSGFSRS (81 aa)). The segment covering 207–231 (EQRKRSKSLDSRLPRDTFEERERQS) has biased composition (basic and acidic residues). The span at 232–266 (TNHWTSSTKYDNHVGTSKQPAQSQNLSPLSGFSRS) shows a compositional bias: polar residues. Residues 358-1160 (VAGQGELTRK…SLEKDSWRKA (803 aa)) adopt a coiled-coil conformation. The residue at position 579 (Lys-579) is an N6-acetyllysine. At Thr-712 the chain carries Phosphothreonine. Disordered stretches follow at residues 1034-1053 (LASS…LESQ) and 1154-1181 (KDSW…EEFD). Low complexity predominate over residues 1044–1053 (SASLSQLESQ). A tail region spans residues 1161-1203 (SRSAAESALKNEGLSSDEEFDSVYDPSSIASLLTESNLQTSSC). 3 positions are modified to phosphoserine: Ser-1175, Ser-1176, and Ser-1182.

This sequence belongs to the cingulin family. Homodimer. Interacts with TJP1/ZO1. Interacts with SPEF1. In terms of tissue distribution, localized on the cytoplasmic face of tight junctions of polarized epithelia and some endothelia. Expressed in pancreas, kidney, liver and lung, but not in skeletal muscle, placenta, brain or heart.

The protein localises to the cell junction. Its subcellular location is the tight junction. In terms of biological role, probably plays a role in the formation and regulation of the tight junction (TJ) paracellular permeability barrier. In Homo sapiens (Human), this protein is Cingulin.